A 226-amino-acid polypeptide reads, in one-letter code: UPF0173 metal-dependent hydrolase GTNG_2675 (226 aa).

This sequence belongs to the UPF0173 family.

This Geobacillus thermodenitrificans (strain NG80-2) protein is UPF0173 metal-dependent hydrolase GTNG_2675.